The primary structure comprises 242 residues: Capsid protein (242 aa).

The Bipartite nuclear localization signal signature appears at Met1–Lys42.

This sequence belongs to the geminiviridae capsid protein family. Homomultimer. Binds to single-stranded and double-stranded viral DNA. Interacts (via nuclear localization signal) with host importin alpha-1a.

The protein resides in the virion. Its subcellular location is the host nucleus. Its function is as follows. Encapsidates the viral genome into characteristic twinned ('geminate') particles. Binds the genomic viral ssDNA and shuttles it into and out of the cell nucleus. Plays a role in protection of the genome from degradation, virus acquisition and transmission by insect vectors, infectivity, and systemic movement. The CP of monopartite geminiviruses is absolutely essential for virus movement. This Solanum lycopersicum (Tomato) protein is Capsid protein.